The following is a 356-amino-acid chain: 1-deoxy-D-xylulose 5-phosphate reductoisomerase (356 aa).

NADPH contacts are provided by Thr-7, Gly-8, Ser-9, Ile-10, Gly-31, Asn-33, and Asn-111. A 1-deoxy-D-xylulose 5-phosphate-binding site is contributed by Lys-112. Glu-113 contacts NADPH. Asp-131 contacts Mn(2+). Positions 132, 133, 155, and 178 each coordinate 1-deoxy-D-xylulose 5-phosphate. A Mn(2+)-binding site is contributed by Glu-133. Gly-184 serves as a coordination point for NADPH. 4 residues coordinate 1-deoxy-D-xylulose 5-phosphate: Ser-191, Asn-196, Lys-197, and Glu-200. Residue Glu-200 coordinates Mn(2+).

It belongs to the DXR family. It depends on Mg(2+) as a cofactor. Mn(2+) is required as a cofactor.

The catalysed reaction is 2-C-methyl-D-erythritol 4-phosphate + NADP(+) = 1-deoxy-D-xylulose 5-phosphate + NADPH + H(+). It participates in isoprenoid biosynthesis; isopentenyl diphosphate biosynthesis via DXP pathway; isopentenyl diphosphate from 1-deoxy-D-xylulose 5-phosphate: step 1/6. In terms of biological role, catalyzes the NADPH-dependent rearrangement and reduction of 1-deoxy-D-xylulose-5-phosphate (DXP) to 2-C-methyl-D-erythritol 4-phosphate (MEP). The polypeptide is 1-deoxy-D-xylulose 5-phosphate reductoisomerase (Campylobacter jejuni subsp. jejuni serotype O:6 (strain 81116 / NCTC 11828)).